We begin with the raw amino-acid sequence, 93 residues long: Alpha-defensin 15 (93 aa).

The N-terminal stretch at 1 to 19 is a signal peptide; sequence MKTLVLLSALVLLAFQVQA. Positions 20–58 are excised as a propeptide; the sequence is DPIQNTDEETKTEEQPGEDDQAVSVSFGDPEGSSLQEES. The segment at 23 to 56 is disordered; it reads QNTDEETKTEEQPGEDDQAVSVSFGDPEGSSLQE. 3 disulfides stabilise this stretch: cysteine 64–cysteine 92, cysteine 66–cysteine 81, and cysteine 71–cysteine 91.

It belongs to the alpha-defensin family. Paneth cells of the small bowel.

The protein resides in the secreted. Its function is as follows. Probably contributes to the antimicrobial barrier function of the small bowel mucosa. This chain is Alpha-defensin 15 (Defa15), found in Mus musculus (Mouse).